Consider the following 327-residue polypeptide: Urease accessory protein 4 (327 aa).

N-linked (GlcNAc...) asparagine glycosylation is present at Asn-120. A helical transmembrane segment spans residues 239–259 (VYATVLIIGPHLTTLFSYLAY).

The protein belongs to the UreD family. URE4, URE6 and URE7 may form a complex that acts as a GTP-hydrolysis-dependent molecular chaperone, activating the urease apoprotein URE1.

It localises to the membrane. Urease accessory protein required for the maturation and activation of urease via the functional incorporation of the urease nickel metallocenter. Plays a role in host brain invasion. This is Urease accessory protein 4 from Cryptococcus neoformans var. grubii serotype A (strain H99 / ATCC 208821 / CBS 10515 / FGSC 9487) (Filobasidiella neoformans var. grubii).